We begin with the raw amino-acid sequence, 591 residues long: Guanylate-binding protein 2 (591 aa).

Residues 1–309 form a GTPase domain (Globular) region; that stretch reads MAPEINLPGP…NAISSGDLPC (309 aa). The region spanning 35 to 276 is the GB1/RHD3-type G domain; sequence TQPVVVVAIV…FCSYILSHSN (242 aa). Residues 45 to 52, 181 to 182, and Leu245 contribute to the GTP site; these read GLYRTGKS and RD. The residue at position 588 (Cys588) is a Cysteine methyl ester. The S-geranylgeranyl cysteine moiety is linked to residue Cys588. Positions 589 to 591 are cleaved as a propeptide — removed in mature form; sequence NIL.

This sequence belongs to the TRAFAC class dynamin-like GTPase superfamily. GB1/RHD3 GTPase family. GB1 subfamily. As to quaternary structure, homodimer; homodimerization occurs upon GTP-binding and is required for the association with membranous structures. Heterodimer with other family members, including GBP1, GBP3, GBP4 and GBP5. Post-translationally, (Microbial infection) Ubiquitinated by S.flexneri IpaH9.8, leading to its degradation by the proteasome, thereby preventing its ability to promote host defense against bacterial infection. In terms of processing, isoprenylation is required for proper subcellular location.

The protein localises to the cytoplasmic vesicle membrane. It localises to the golgi apparatus membrane. The protein resides in the cytoplasm. It is found in the perinuclear region. It catalyses the reaction GTP + H2O = GDP + phosphate + H(+). In terms of biological role, interferon (IFN)-inducible GTPase that plays important roles in innate immunity against a diverse range of bacterial, viral and protozoan pathogens. Hydrolyzes GTP to GMP in 2 consecutive cleavage reactions, but the major reaction product is GDP. Following infection, recruited to the pathogen-containing vacuoles or vacuole-escaped bacteria and acts as a positive regulator of inflammasome assembly by promoting the release of inflammasome ligands from bacteria. Acts by promoting lysis of pathogen-containing vacuoles, releasing pathogens into the cytosol. Following pathogen release in the cytosol, promotes recruitment of proteins that mediate bacterial cytolysis: this liberates ligands that are detected by inflammasomes, such as lipopolysaccharide (LPS) that activates the non-canonical CASP4/CASP11 inflammasome or double-stranded DNA (dsDNA) that activates the AIM2 inflammasome. Confers protection to the protozoan pathogen Toxoplasma gondii. Independently of its GTPase activity, acts as an inhibitor of various viruses infectivity, such as HIV-1, Zika and influenza A viruses, by inhibiting FURIN-mediated maturation of viral envelope proteins. This is Guanylate-binding protein 2 from Homo sapiens (Human).